Reading from the N-terminus, the 224-residue chain is Cytidylate kinase (224 aa).

12 to 20 contacts ATP; the sequence is GPSGAGKGT.

It belongs to the cytidylate kinase family. Type 1 subfamily.

It is found in the cytoplasm. It catalyses the reaction CMP + ATP = CDP + ADP. It carries out the reaction dCMP + ATP = dCDP + ADP. The sequence is that of Cytidylate kinase from Aliivibrio salmonicida (strain LFI1238) (Vibrio salmonicida (strain LFI1238)).